Consider the following 64-residue polypeptide: Small ribosomal subunit protein bS21 (64 aa).

It belongs to the bacterial ribosomal protein bS21 family.

In Oenococcus oeni (strain ATCC BAA-331 / PSU-1), this protein is Small ribosomal subunit protein bS21.